The chain runs to 252 residues: ATP synthase subunit a (252 aa).

7 helical membrane passes run 6–26 (LEQF…YFSF), 31–51 (LFML…TLNG), 88–108 (FFPL…IGMI), 117–137 (HFII…IVGF), 144–164 (FFSI…LVLL), 190–212 (LVKI…YLGQ), and 225–245 (LELG…CIYL).

This sequence belongs to the ATPase A chain family. As to quaternary structure, F-type ATPases have 2 components, CF(1) - the catalytic core - and CF(0) - the membrane proton channel. CF(1) has five subunits: alpha(3), beta(3), gamma(1), delta(1), epsilon(1). CF(0) has three main subunits: a, b and c.

The protein localises to the mitochondrion inner membrane. Functionally, mitochondrial membrane ATP synthase (F(1)F(0) ATP synthase or Complex V) produces ATP from ADP in the presence of a proton gradient across the membrane which is generated by electron transport complexes of the respiratory chain. F-type ATPases consist of two structural domains, F(1) - containing the extramembraneous catalytic core and F(0) - containing the membrane proton channel, linked together by a central stalk and a peripheral stalk. During catalysis, ATP synthesis in the catalytic domain of F(1) is coupled via a rotary mechanism of the central stalk subunits to proton translocation. Key component of the proton channel; it may play a direct role in the translocation of protons across the membrane. This Marchantia polymorpha (Common liverwort) protein is ATP synthase subunit a (ATP6).